We begin with the raw amino-acid sequence, 289 residues long: ATP synthase gamma chain (289 aa).

Belongs to the ATPase gamma chain family. F-type ATPases have 2 components, CF(1) - the catalytic core - and CF(0) - the membrane proton channel. CF(1) has five subunits: alpha(3), beta(3), gamma(1), delta(1), epsilon(1). CF(0) has three main subunits: a, b and c.

The protein resides in the cell inner membrane. Functionally, produces ATP from ADP in the presence of a proton gradient across the membrane. The gamma chain is believed to be important in regulating ATPase activity and the flow of protons through the CF(0) complex. The chain is ATP synthase gamma chain from Pasteurella multocida (strain Pm70).